The sequence spans 568 residues: Urease subunit alpha (568 aa).

In terms of domain architecture, Urease spans 130 to 568; sequence GGIDTHIHFI…LPMAQRYFLF (439 aa). Ni(2+) contacts are provided by H135, H137, and K218. Position 218 is an N6-carboxylysine (K218). H220 is a binding site for substrate. Residues H247 and H273 each contribute to the Ni(2+) site. H321 acts as the Proton donor in catalysis. D361 lines the Ni(2+) pocket.

This sequence belongs to the metallo-dependent hydrolases superfamily. Urease alpha subunit family. As to quaternary structure, heterotrimer of UreA (gamma), UreB (beta) and UreC (alpha) subunits. Three heterotrimers associate to form the active enzyme. Requires Ni cation as cofactor. Post-translationally, carboxylation allows a single lysine to coordinate two nickel ions.

The protein resides in the cytoplasm. It catalyses the reaction urea + 2 H2O + H(+) = hydrogencarbonate + 2 NH4(+). Its pathway is nitrogen metabolism; urea degradation; CO(2) and NH(3) from urea (urease route): step 1/1. This chain is Urease subunit alpha, found in Burkholderia orbicola (strain MC0-3).